The chain runs to 218 residues: MNSKIIRFENLRSFFKDGMTIMIGGFLNCGTPTKLIDFLVNLNIKNLTIISNDTCYPNTGIGKLISNNQVKKLIASYIGSNPDTGKKLFNNELEVELSPQGTLVERIRAGGSGLGGVLTKTGLGTLIEKGKKKISINGTEYLLELPLTADVALIKGSIVDEAGNTFYKGTTKNFNPYMAMAAKTVIVEAENLVSCEKLEKEKAMTPGVLINYIVKEPA.

Residue 24–30 participates in CoA binding; sequence GGFLNCG.

It belongs to the 3-oxoacid CoA-transferase subunit A family. Heterotetramer composed of two alpha subunits (CtfA) and two beta subunits (CtfB).

It carries out the reaction acetoacetate + butanoyl-CoA = acetoacetyl-CoA + butanoate. The catalysed reaction is acetoacetate + acetyl-CoA = acetoacetyl-CoA + acetate. The acetate and butyrate conversion reactions are inhibited in vitro by physiological levels of acetone and butanol. Its function is as follows. Catalyzes the transfer of CoA from acetoacetyl-CoA to acetate, butyrate and propionate. Also shows low activity with valerate, isobutyrate and crotonate. Plays an important role in the metabolic shift between the acid-producing and solvent-forming states of C.acetobutylicum. Acts mainly to detoxify the medium by removing the acetate and butyrate excreted earlier in the fermentation. In Clostridium acetobutylicum (strain ATCC 824 / DSM 792 / JCM 1419 / IAM 19013 / LMG 5710 / NBRC 13948 / NRRL B-527 / VKM B-1787 / 2291 / W), this protein is Acetoacetyl-CoA:acetate/butyrate CoA transferase alpha subunit.